The following is a 141-amino-acid chain: NGSIMGALYKGLIATGLLSIVGLGVANTLTVGWGEIGTVAGKSITGTNLFVCGLIGLIVTGLIVVITEYYTGTNKRPVNSXAQASVTGHGTNVIQGLAVSLESTALPAIVIVGGIIXTYQLAGLFGTAIAVTAMLGIAGMI.

3 helical membrane-spanning segments follow: residues 11-31, 46-66, and 121-141; these read GLIA…TLTV, GTNL…IVVI, and LAGL…AGMI.

Belongs to the H(+)-translocating pyrophosphatase (TC 3.A.10) family. As to quaternary structure, homodimer. Requires Mg(2+) as cofactor.

It localises to the cell inner membrane. The catalysed reaction is diphosphate + H2O + H(+)(in) = 2 phosphate + 2 H(+)(out). In terms of biological role, proton pump that utilizes the energy of pyrophosphate hydrolysis as the driving force for proton movement across the membrane. Generates a proton motive force. In Anaplasma marginale, this protein is Pyrophosphate-energized proton pump (hppA).